Here is a 472-residue protein sequence, read N- to C-terminus: Sulfate adenylyltransferase subunit 1 (472 aa).

The tr-type G domain occupies 24–240 (KSLLRFLTCG…ENAEVGTRDL (217 aa)). The interval 33 to 40 (GSVDDGKS) is G1. 33-40 (GSVDDGKS) lines the GTP pocket. Residues 91-95 (GITID) are G2. The tract at residues 112-115 (DTPG) is G3. GTP contacts are provided by residues 112 to 116 (DTPGH) and 167 to 170 (NKMD). The G4 stretch occupies residues 167-170 (NKMD). The interval 204 to 206 (SAL) is G5.

The protein belongs to the TRAFAC class translation factor GTPase superfamily. Classic translation factor GTPase family. CysN/NodQ subfamily. As to quaternary structure, heterodimer composed of CysD, the smaller subunit, and CysN.

It carries out the reaction sulfate + ATP + H(+) = adenosine 5'-phosphosulfate + diphosphate. Its pathway is sulfur metabolism; hydrogen sulfide biosynthesis; sulfite from sulfate: step 1/3. Its function is as follows. With CysD forms the ATP sulfurylase (ATPS) that catalyzes the adenylation of sulfate producing adenosine 5'-phosphosulfate (APS) and diphosphate, the first enzymatic step in sulfur assimilation pathway. APS synthesis involves the formation of a high-energy phosphoric-sulfuric acid anhydride bond driven by GTP hydrolysis by CysN coupled to ATP hydrolysis by CysD. This is Sulfate adenylyltransferase subunit 1 from Tolumonas auensis (strain DSM 9187 / NBRC 110442 / TA 4).